Here is a 247-residue protein sequence, read N- to C-terminus: tRNA (guanine-N(1)-)-methyltransferase (247 aa).

S-adenosyl-L-methionine-binding positions include glycine 112 and 131 to 136; that span reads LGDFVL.

It belongs to the RNA methyltransferase TrmD family. Homodimer.

Its subcellular location is the cytoplasm. It catalyses the reaction guanosine(37) in tRNA + S-adenosyl-L-methionine = N(1)-methylguanosine(37) in tRNA + S-adenosyl-L-homocysteine + H(+). Specifically methylates guanosine-37 in various tRNAs. The protein is tRNA (guanine-N(1)-)-methyltransferase of Syntrophotalea carbinolica (strain DSM 2380 / NBRC 103641 / GraBd1) (Pelobacter carbinolicus).